The chain runs to 860 residues: Leucine--tRNA ligase (860 aa).

The 'HIGH' region motif lies at 42-52; sequence PYPSGRLHMGH. The 'KMSKS' region motif lies at 619–623; the sequence is KMSKS. Lys-622 provides a ligand contact to ATP.

This sequence belongs to the class-I aminoacyl-tRNA synthetase family.

Its subcellular location is the cytoplasm. It catalyses the reaction tRNA(Leu) + L-leucine + ATP = L-leucyl-tRNA(Leu) + AMP + diphosphate. The protein is Leucine--tRNA ligase of Pectobacterium atrosepticum (strain SCRI 1043 / ATCC BAA-672) (Erwinia carotovora subsp. atroseptica).